The primary structure comprises 213 residues: N-(5'-phosphoribosyl)anthranilate isomerase (213 aa).

It belongs to the TrpF family.

It catalyses the reaction N-(5-phospho-beta-D-ribosyl)anthranilate = 1-(2-carboxyphenylamino)-1-deoxy-D-ribulose 5-phosphate. Its pathway is amino-acid biosynthesis; L-tryptophan biosynthesis; L-tryptophan from chorismate: step 3/5. In Rhodopseudomonas palustris (strain ATCC BAA-98 / CGA009), this protein is N-(5'-phosphoribosyl)anthranilate isomerase.